The sequence spans 69 residues: TKSSRYCTTEGXDTALRHXPIGANQSAFKSKRXASESLASELIAASNRDAKCFSINRKDGKERVAKAAR.

Belongs to the universal ribosomal protein uS7 family. As to quaternary structure, part of the 30S ribosomal subunit.

Functionally, one of the primary rRNA binding proteins, it binds directly to 16S rRNA where it nucleates assembly of the head domain of the 30S subunit. Is located at the subunit interface close to the decoding center. This is Small ribosomal subunit protein uS7 (rps7) from Methanococcoides methylutens.